A 416-amino-acid chain; its full sequence is Putative pseudouridine transporter (416 aa).

Residues 1–2 (MD) are Periplasmic-facing. A helical transmembrane segment spans residues 3–23 (IMRSVVGMVVLLAIAFLLSVN). Over 24 to 31 (KKSISLRT) the chain is Cytoplasmic. A helical membrane pass occupies residues 32–52 (VGAALLLQIAIGGIMLYFPPG). Topologically, residues 53–104 (KWAVEQAALGVHKVMSYSDAGSAFIFGSLVGPKMDVLFDGAGFIFAFRVLPA) are periplasmic. A helical membrane pass occupies residues 105 to 125 (IIFVTALISLLYYIGVMGLLI). The Cytoplasmic portion of the chain corresponds to 126–172 (RILGSIFQKALNISKIESFVAVTTIFLGQNEIPAIVKPFIDRMNRNE). Residues 173-193 (LFTAICSGMASIAGSMMIGYA) traverse the membrane as a helical segment. Over 194-196 (GMG) the chain is Periplasmic. Residues 197–217 (VPIDYLLAASLMAIPGGILFA) traverse the membrane as a helical segment. The Cytoplasmic portion of the chain corresponds to 218-268 (RILSPATEPSQVTFENLSFSETPPKSFIEAAASGAMTGLKIAAGVATVVMA). A helical transmembrane segment spans residues 269–289 (FVAIIALINGIIGGIGGWFGF). Topologically, residues 290–352 (ANASLESIFG…QTGGTLEVKT (63 aa)) are periplasmic. A helical transmembrane segment spans residues 353-373 (IAIISFALCGFANFGSIGVVV). The Cytoplasmic portion of the chain corresponds to 374–394 (GAFSAISPKRAPEIAQLGLRA). Residues 395–415 (LAAATLSNLMSATIAGFFIGL) form a helical membrane-spanning segment. Ala-416 is a topological domain (periplasmic).

The protein belongs to the concentrative nucleoside transporter (CNT) (TC 2.A.41) family.

Its subcellular location is the cell inner membrane. Its function is as follows. Could be involved in pseudouridine transport. This chain is Putative pseudouridine transporter (psuT), found in Escherichia coli (strain K12).